A 56-amino-acid polypeptide reads, in one-letter code: Large ribosomal subunit protein bL33B (56 aa).

This sequence belongs to the bacterial ribosomal protein bL33 family.

This Cutibacterium acnes (strain DSM 16379 / KPA171202) (Propionibacterium acnes) protein is Large ribosomal subunit protein bL33B.